Reading from the N-terminus, the 327-residue chain is GPI-linked NAD(P)(+)--arginine ADP-ribosyltransferase 1 (327 aa).

The signal sequence occupies residues 1–22; that stretch reads MQMPAMMSLLLVSVGLMEALQA. Intrachain disulfides connect cysteine 53-cysteine 277 and cysteine 174-cysteine 224. A glycan (N-linked (GlcNAc...) asparagine) is linked at asparagine 65. The TR mART core domain occupies 73-273; that stretch reads QVYADSWTLA…IYLRALGKHS (201 aa). 2 residues coordinate NAD(+): tyrosine 121 and arginine 179. Catalysis depends on residues arginine 179 and serine 202. Serine 233 serves as a coordination point for NAD(+). Residue glutamate 240 is part of the active site. N-linked (GlcNAc...) asparagine glycosylation occurs at asparagine 253. Serine 295 is lipidated: GPI-anchor amidated serine. Residues 296–327 constitute a propeptide, removed in mature form; it reads AMGQSPLSAVWSLLLLLWFLVVRAFPDGPGLL.

Belongs to the Arg-specific ADP-ribosyltransferase family.

It is found in the sarcoplasmic reticulum membrane. The enzyme catalyses L-arginyl-[protein] + NAD(+) = N(omega)-(ADP-D-ribosyl)-L-arginyl-[protein] + nicotinamide + H(+). Its function is as follows. Has ADP-ribosyltransferase activity toward GLP1R. This Homo sapiens (Human) protein is GPI-linked NAD(P)(+)--arginine ADP-ribosyltransferase 1 (ART1).